The chain runs to 897 residues: Alpha-actinin-2 (897 aa).

Positions 1–257 are actin-binding; that stretch reads MNSMNQIETN…IMTYVSCFYH (257 aa). Calponin-homology (CH) domains are found at residues 41–145 and 154–260; these read KQQR…LRFA and TSAK…HAFA. Spectrin repeat units follow at residues 284-394, 404-509, 519-630, and 640-743; these read RLME…WLLN, HLAE…ALER, QLHL…SLQE, and RLRR…EVET. 2 consecutive EF-hand domains span residues 756 to 791 and 792 to 827; these read EQMN…MGYD and LGEA…ETAD. Ca(2+) is bound by residues Asp769, Asn773, Asp780, Asp805, Asn807, and Thr811.

Belongs to the alpha-actinin family. Homodimer; antiparallel. Ubiquitinated by FBXL22, leading to proteasomal degradation.

It localises to the cytoplasm. It is found in the myofibril. Its subcellular location is the sarcomere. The protein localises to the z line. In terms of biological role, F-actin cross-linking protein which is thought to anchor actin to a variety of intracellular structures. This is a bundling protein. This chain is Alpha-actinin-2 (ACTN2), found in Gallus gallus (Chicken).